A 522-amino-acid polypeptide reads, in one-letter code: Phosphatidylinositol 3,4,5-trisphosphate 3-phosphatase TPTE2 (522 aa).

Over residues 1-11 (MNESPQTNEFK) the composition is skewed to polar residues. The segment at 1 to 28 (MNESPQTNEFKGTTEEAPAKESPHTSEF) is disordered. Positions 12-27 (GTTEEAPAKESPHTSE) are enriched in basic and acidic residues. 3 consecutive transmembrane segments (helical) span residues 66 to 86 (IVHS…LVLL), 111 to 131 (ISLA…FVEG), and 146 to 166 (AIIV…IKLL). One can recognise a Phosphatase tensin-type domain in the interval 210–386 (RRYTRDGFDL…GYFAQVKHLY (177 aa)). Cys320 (phosphocysteine intermediate) is an active-site residue. The C2 tensin-type domain occupies 393 to 522 (RRILFIKRFI…FAVEILFGEK (130 aa)).

As to expression, isoform 3 is expressed in testis, brain and stomach while isoform 4 seems to be testis-specific.

The protein localises to the endoplasmic reticulum membrane. The protein resides in the golgi apparatus membrane. It localises to the cytoplasm. The catalysed reaction is a 1,2-diacyl-sn-glycero-3-phospho-(1D-myo-inositol-3,4,5-trisphosphate) + H2O = a 1,2-diacyl-sn-glycero-3-phospho-(1D-myo-inositol-4,5-bisphosphate) + phosphate. Functionally, acts as a lipid phosphatase, removing the phosphate in the D3 position of the inositol ring from phosphatidylinositol 3,4,5-trisphosphate. Its function is as follows. Shows no phosphoinositide phosphatase activity. The protein is Phosphatidylinositol 3,4,5-trisphosphate 3-phosphatase TPTE2 (TPTE2) of Homo sapiens (Human).